The primary structure comprises 466 residues: 3-isopropylmalate dehydratase large subunit (466 aa).

[4Fe-4S] cluster-binding residues include cysteine 347, cysteine 408, and cysteine 411.

The protein belongs to the aconitase/IPM isomerase family. LeuC type 1 subfamily. As to quaternary structure, heterodimer of LeuC and LeuD. It depends on [4Fe-4S] cluster as a cofactor.

The enzyme catalyses (2R,3S)-3-isopropylmalate = (2S)-2-isopropylmalate. It functions in the pathway amino-acid biosynthesis; L-leucine biosynthesis; L-leucine from 3-methyl-2-oxobutanoate: step 2/4. Catalyzes the isomerization between 2-isopropylmalate and 3-isopropylmalate, via the formation of 2-isopropylmaleate. In Herminiimonas arsenicoxydans, this protein is 3-isopropylmalate dehydratase large subunit.